A 1187-amino-acid polypeptide reads, in one-letter code: DNA-directed RNA polymerase subunit beta (1187 aa).

The interval 1150-1187 is disordered; it reads KDEDDDPASSADDLGFNIGARPDAAAKEDQKAEEPEYQ. Basic and acidic residues predominate over residues 1173–1187; sequence AAAKEDQKAEEPEYQ.

Belongs to the RNA polymerase beta chain family. As to quaternary structure, the RNAP catalytic core consists of 2 alpha, 1 beta, 1 beta' and 1 omega subunit. When a sigma factor is associated with the core the holoenzyme is formed, which can initiate transcription.

It catalyses the reaction RNA(n) + a ribonucleoside 5'-triphosphate = RNA(n+1) + diphosphate. DNA-dependent RNA polymerase catalyzes the transcription of DNA into RNA using the four ribonucleoside triphosphates as substrates. The sequence is that of DNA-directed RNA polymerase subunit beta from Bifidobacterium longum (strain DJO10A).